The chain runs to 335 residues: DNA polymerase beta (335 aa).

Residue Lys41 forms a Glycyl lysine isopeptide (Lys-Gly) (interchain with G-Cter in ubiquitin) linkage. Lys60 contacts K(+). Na(+) is bound at residue Lys60. Lys61 participates in a covalent cross-link: Glycyl lysine isopeptide (Lys-Gly) (interchain with G-Cter in ubiquitin). K(+)-binding residues include Leu62 and Val65. Residues Leu62 and Val65 each contribute to the Na(+) site. The active-site Nucleophile; Schiff-base intermediate with DNA; for 5'-dRP lyase activity is the Lys72. N6-acetyllysine is present on Lys72. A Glycyl lysine isopeptide (Lys-Gly) (interchain with G-Cter in ubiquitin) cross-link involves residue Lys81. Arg83 is subject to Omega-N-methylarginine; by PRMT6. 3 residues coordinate K(+): Thr101, Val103, and Ile106. The Na(+) site is built by Thr101, Val103, and Ile106. Residue Arg149 participates in dATP binding. Arg149 is a dCTP binding site. DGTP is bound at residue Arg149. Residue Arg149 coordinates dTTP. Arg152 carries the post-translational modification Omega-N-methylarginine; by PRMT6. DATP-binding residues include Ser180, Arg183, Gly189, and Asp190. Positions 180, 183, 189, and 190 each coordinate dCTP. Residues Ser180, Arg183, Gly189, Asp190, and Asp192 each contribute to the dGTP site. Residues Ser180, Arg183, Gly189, and Asp190 each coordinate dTTP. Residues Arg183–Asp192 are DNA-binding. Mg(2+) contacts are provided by Asp190, Asp192, and Asp256.

Belongs to the DNA polymerase type-X family. In terms of assembly, monomer. Binds single-stranded DNA (ssDNA). Interacts with APEX1, LIG1, LIG3, FEN1, PCNA and XRCC1. Interacts with HUWE1/ARF-BP1, STUB1/CHIP and USP47. Interacts with FAM168A. It depends on Mg(2+) as a cofactor. Post-translationally, methylation by PRMT6 stimulates the polymerase activity by enhancing DNA binding and processivity. In terms of processing, ubiquitinated at Lys-41, Lys-61 and Lys-81: monoubiquitinated by HUWE1/ARF-BP1. Monoubiquitinated protein is then the target of STUB1/CHIP, which catalyzes polyubiquitination from monoubiquitin, leading to degradation by the proteasome. USP47 mediates the deubiquitination of monoubiquitinated protein, preventing polyubiquitination by STUB1/CHIP and its subsequent degradation.

It localises to the nucleus. The protein resides in the cytoplasm. It carries out the reaction DNA(n) + a 2'-deoxyribonucleoside 5'-triphosphate = DNA(n+1) + diphosphate. It catalyses the reaction a 5'-end 2'-deoxyribose-2'-deoxyribonucleotide-DNA = (2E,4S)-4-hydroxypenten-2-al-5-phosphate + a 5'-end 5'-phospho-2'-deoxyribonucleoside-DNA + H(+). The catalysed reaction is 2'-deoxyribonucleotide-(2'-deoxyribose 5'-phosphate)-2'-deoxyribonucleotide-DNA = a 3'-end 2'-deoxyribonucleotide-(2,3-dehydro-2,3-deoxyribose 5'-phosphate)-DNA + a 5'-end 5'-phospho-2'-deoxyribonucleoside-DNA + H(+). Repair polymerase that plays a key role in base-excision repair. During this process, the damaged base is excised by specific DNA glycosylases, the DNA backbone is nicked at the abasic site by an apurinic/apyrimidic (AP) endonuclease, and POLB removes 5'-deoxyribose-phosphate from the preincised AP site acting as a 5'-deoxyribose-phosphate lyase (5'-dRP lyase); through its DNA polymerase activity, it adds one nucleotide to the 3' end of the arising single-nucleotide gap. Conducts 'gap-filling' DNA synthesis in a stepwise distributive fashion rather than in a processive fashion as for other DNA polymerases. It is also able to cleave sugar-phosphate bonds 3' to an intact AP site, acting as an AP lyase. This is DNA polymerase beta (POLB) from Homo sapiens (Human).